Here is a 911-residue protein sequence, read N- to C-terminus: Valine--tRNA ligase (911 aa).

The 'HIGH' region motif lies at 57-67; that stretch reads PTVSGSLHVGH. A 'KMSKS' region motif is present at residues 599–603; that stretch reads KMSKS. Lys602 provides a ligand contact to ATP. The tract at residues 882-911 is disordered; that stretch reads EESAAEDAPETEVAVEASELGEPPAKKPKH.

Belongs to the class-I aminoacyl-tRNA synthetase family. ValS type 2 subfamily. In terms of assembly, monomer.

It localises to the cytoplasm. It catalyses the reaction tRNA(Val) + L-valine + ATP = L-valyl-tRNA(Val) + AMP + diphosphate. Catalyzes the attachment of valine to tRNA(Val). As ValRS can inadvertently accommodate and process structurally similar amino acids such as threonine, to avoid such errors, it has a 'posttransfer' editing activity that hydrolyzes mischarged Thr-tRNA(Val) in a tRNA-dependent manner. This Bifidobacterium longum (strain DJO10A) protein is Valine--tRNA ligase.